The following is a 2961-amino-acid chain: Zinc finger ZZ-type and EF-hand domain-containing protein 1 (2961 aa).

A disordered region spans residues 1-41 (MGNAPSHSSEDEAAAAGGEGWGPHQDWAAVSGTTPGPGVAA). Gly2 carries the N-myristoyl glycine lipid modification. One can recognise an EF-hand domain in the interval 111–146 (CSSEQFEEAFAQFDAEGDGTVDAENMLEALKNSSGA). In terms of domain architecture, DOC spans 226–405 (LVQKEKESPG…AIWYWSLLTS (180 aa)). A phosphoserine mark is found at Ser240, Ser1475, Ser1488, and Ser1509. Residues 1446–1531 (TADETSHLQP…PTRRPPFTRG (86 aa)) are disordered. A compositionally biased stretch (polar residues) spans 1485–1502 (GDQSPGLGTQPKLPSSSG). A Phosphothreonine modification is found at Thr1512. Residues 1516–1531 (PLSPSTPTRRPPFTRG) show a composition bias toward low complexity. A Phosphoserine modification is found at Ser1518. A phosphothreonine mark is found at Thr1521 and Thr1523. Ser1537 and Ser1540 each carry phosphoserine. ZZ-type zinc fingers lie at residues 1778-1833 (NVDI…FTCD) and 1827-1882 (NMEF…MVTI). Positions 1783, 1786, 1797, 1800, 1806, 1809, 1819, 1823, 1832, 1835, 1846, 1849, 1855, 1858, 1868, and 1872 each coordinate Zn(2+). Disordered regions lie at residues 1994–2078 (AVQG…PSPE) and 2426–2455 (LELDERGDREEEVERPVSSPGDPEQKKLDP). The segment covering 2009 to 2027 (AVHEEIRPVDFKQRNKADK) has biased composition (basic and acidic residues). A compositionally biased stretch (polar residues) spans 2033-2043 (KDPSCQTQISD). A compositionally biased stretch (basic and acidic residues) spans 2426-2440 (LELDERGDREEEVER). Ser2444 carries the post-translational modification Phosphoserine. Lys2667 is subject to N6-acetyllysine.

As to quaternary structure, interacts with KLF6 and KLF9. Interacts via (ZZ-type 2 zinc finger) with histone H3 trimethylated at 'Lys-4' (H3K4me3) and histone H3 acetylated at 'Lys-4' (H3K4ac). In terms of tissue distribution, expressed at low levels in cerebellum.

Histone H3 reader which may act as a transcriptional coactivator for KLF6 and KLF9 transcription factors. This is Zinc finger ZZ-type and EF-hand domain-containing protein 1 from Homo sapiens (Human).